The chain runs to 132 residues: Ribosome-binding factor A (132 aa).

Belongs to the RbfA family. As to quaternary structure, monomer. Binds 30S ribosomal subunits, but not 50S ribosomal subunits or 70S ribosomes.

It localises to the cytoplasm. In terms of biological role, one of several proteins that assist in the late maturation steps of the functional core of the 30S ribosomal subunit. Associates with free 30S ribosomal subunits (but not with 30S subunits that are part of 70S ribosomes or polysomes). Required for efficient processing of 16S rRNA. May interact with the 5'-terminal helix region of 16S rRNA. This Prochlorococcus marinus (strain MIT 9515) protein is Ribosome-binding factor A.